The following is a 3029-amino-acid chain: Polycystin-1-related protein (3029 aa).

Positions 1–21 (MAKHLYLAFSLILVPFLVSKA) are cleaved as a signal peptide. The Extracellular portion of the chain corresponds to 22 to 1685 (KQTSNGEVPW…RDTDKLKNSP (1664 aa)). The 93-residue stretch at 29–121 (VPWLVGCYRY…KNVASVYSTA (93 aa)) folds into the WSC domain. 2 PKD domains span residues 364-450 (EGHC…IKGV) and 546-634 (DHLF…PECY). One can recognise an REJ domain in the interval 633–1476 (CYTRGVAIVG…NPYFSDMNHT (844 aa)). 3 disordered regions span residues 754-773 (RKGP…HPDE), 909-931 (CPSD…SNSP), and 989-1051 (TSAI…PNKP). A compositionally biased stretch (polar residues) spans 918–931 (VTPSTTPMTDSNSP). Over residues 997–1013 (SGDVDDDEVNNDNDDDS) the composition is skewed to acidic residues. Residues 1020 to 1047 (TLPTPLSMTNANSVNKPIITTDTPSFNK) are compositionally biased toward polar residues. Positions 1525 to 1671 (RNVHVINQTA…GFIQPPNSLH (147 aa)) constitute a GAIN-B domain. 2 disulfides stabilise this stretch: C1624–C1651 and C1639–C1653. The GPS stretch occupies residues 1624 to 1671 (CFYWNKRGKHWASDGCRLEKSINHTLVCRCNHLTAFSGGFIQPPNSLH). The helical transmembrane segment at 1686–1706 (LTMVLVISILVMYFLLLGFCV) threads the bilayer. The Cytoplasmic segment spans residues 1707–1895 (KADRHDKKKL…SYSRFTRAQR (189 aa)). A PLAT domain is found at 1733 to 1851 (SRFQLSVQTG…GNGKVECELF (119 aa)). A helical membrane pass occupies residues 1896 to 1916 (LSCCLSLLLSFLCVNIAWYRP). Residues 1917–1933 (KIEVTEVLGVLDVSANS) are Extracellular-facing. A helical membrane pass occupies residues 1934-1954 (IMIGVLGSLMVLPVNFLWIFF). Residues 1955–2101 (FRYSRRSLSR…YRSKFSLPHG (147 aa)) are Cytoplasmic-facing. Residues 2102–2122 (FVYVAWFGCLITGTVTSAITI) traverse the membrane as a helical segment. The Extracellular segment spans residues 2123 to 2140 (WYGLSFGWDLSVHWFQSL). The chain crosses the membrane as a helical span at residues 2141-2161 (VFSLLESLLLSQPIMVLAFIF). Residues 2162–2250 (YMSHKTKSGK…SLKNRVLRNY (89 aa)) lie on the Cytoplasmic side of the membrane. A helical transmembrane segment spans residues 2251-2271 (VVELFVFIMFFVVTCALVFSV). Topologically, residues 2272-2462 (ADPDVYHLNQ…GYSYFIRFTK (191 aa)) are extracellular. Residues 2463-2483 (LLFVVFFLYLLQHEFFLALKM) traverse the membrane as a helical segment. Over 2484–2496 (TFSYFTNFWRVYQ) the chain is Cytoplasmic. Residues 2497–2517 (LLTIAISSACIVSYIHWSLSL) traverse the membrane as a helical segment. The Extracellular portion of the chain corresponds to 2518–2538 (YALLREVETERQSRVFYLSRQ). The helical transmembrane segment at 2539–2559 (ISWSQGFLQASYSLLLFLLLI) threads the bilayer. The Cytoplasmic portion of the chain corresponds to 2560 to 2586 (RCLHLLRPFRFVRHFGRILSTSISSLL). The helical transmembrane segment at 2587–2607 (ACWVFGFILVVAFAHPGYLLF) threads the bilayer. Residues 2608-2651 (GSVHSSFKSFGDAFLLVTSFFRLEGVARYQDFALEEQTLLLSTY) are Extracellular-facing. The chain crosses the membrane as a helical span at residues 2652–2672 (FALFLIGFCVIVRGSTAAVVL). Residues 2673–3029 (HGIRCLGKRR…PVGQRVVSAM (357 aa)) are Cytoplasmic-facing. Residues 2704-2726 (KKPKKPRPNSVSDLEETDDEDDL) are disordered. A compositionally biased stretch (acidic residues) spans 2716–2726 (DLEETDDEDDL).

This sequence belongs to the polycystin family. Heterodimer of 2 chains generated by proteolytic processing; the large extracellular N-terminal fragment and the membrane-bound C-terminal fragment predominantly remain associated and non-covalently linked. Autoproteolytically processed at the GPS region of the GAIN-B domain; this cleavage modulates receptor activity. In terms of tissue distribution, component of the acid-insoluble and acid-soluble organic matrix of the aragonitic skeleton (at protein level).

The protein resides in the membrane. This chain is Polycystin-1-related protein, found in Acropora millepora (Staghorn coral).